The chain runs to 237 residues: Demethylmenaquinone methyltransferase (237 aa).

Residues T58, D79, and 106-107 (NA) each bind S-adenosyl-L-methionine.

This sequence belongs to the class I-like SAM-binding methyltransferase superfamily. MenG/UbiE family.

It carries out the reaction a 2-demethylmenaquinol + S-adenosyl-L-methionine = a menaquinol + S-adenosyl-L-homocysteine + H(+). Its pathway is quinol/quinone metabolism; menaquinone biosynthesis; menaquinol from 1,4-dihydroxy-2-naphthoate: step 2/2. Functionally, methyltransferase required for the conversion of demethylmenaquinol (DMKH2) to menaquinol (MKH2). This chain is Demethylmenaquinone methyltransferase, found in Bacillus mycoides (strain KBAB4) (Bacillus weihenstephanensis).